Consider the following 135-residue polypeptide: Probable histone H2A.2 (135 aa).

This sequence belongs to the histone H2A family. The nucleosome is a histone octamer containing two molecules each of H2A, H2B, H3 and H4 assembled in one H3-H4 heterotetramer and two H2A-H2B heterodimers. The octamer wraps approximately 147 bp of DNA.

Its subcellular location is the nucleus. It localises to the chromosome. In terms of biological role, core component of nucleosome. Nucleosomes wrap and compact DNA into chromatin, limiting DNA accessibility to the cellular machineries which require DNA as a template. Histones thereby play a central role in transcription regulation, DNA repair, DNA replication and chromosomal stability. DNA accessibility is regulated via a complex set of post-translational modifications of histones, also called histone code, and nucleosome remodeling. The sequence is that of Probable histone H2A.2 from Oryza sativa subsp. indica (Rice).